The following is a 228-amino-acid chain: UPF0173 metal-dependent hydrolase LMHCC_0991 (228 aa).

This sequence belongs to the UPF0173 family.

This is UPF0173 metal-dependent hydrolase LMHCC_0991 from Listeria monocytogenes serotype 4a (strain HCC23).